The sequence spans 304 residues: Phosphate transport system permease protein PstA 1 (304 aa).

Transmembrane regions (helical) follow at residues 36 to 56 (FFFT…WVVI), 96 to 116 (AGVA…YLVE), 132 to 152 (VLAG…WIAT), 155 to 175 (FQQS…PVVV), 204 to 224 (IVRI…LLSI), and 276 to 296 (WGAA…AAMI). One can recognise an ABC transmembrane type-1 domain in the interval 89-297 (LYGTLVQAGV…TINLAAAMIR (209 aa)).

This sequence belongs to the binding-protein-dependent transport system permease family. CysTW subfamily.

Its subcellular location is the cell membrane. Its function is as follows. Part of the binding-protein-dependent transport system for phosphate; probably responsible for the translocation of the substrate across the membrane. The protein is Phosphate transport system permease protein PstA 1 (pstA1) of Mycobacterium tuberculosis (strain CDC 1551 / Oshkosh).